We begin with the raw amino-acid sequence, 277 residues long: Large ribosomal subunit protein uL2 (277 aa).

The disordered stretch occupies residues 219 to 277 (TVRGSVMNPNDHPHGGGEGKAPVGRKAPSTPWGKPALGLKTRNKKAKSDKLIVRRRNEK). Positions 264–277 (AKSDKLIVRRRNEK) are enriched in basic and acidic residues.

It belongs to the universal ribosomal protein uL2 family. In terms of assembly, part of the 50S ribosomal subunit. Forms a bridge to the 30S subunit in the 70S ribosome.

Functionally, one of the primary rRNA binding proteins. Required for association of the 30S and 50S subunits to form the 70S ribosome, for tRNA binding and peptide bond formation. It has been suggested to have peptidyltransferase activity; this is somewhat controversial. Makes several contacts with the 16S rRNA in the 70S ribosome. In Streptococcus pneumoniae serotype 2 (strain D39 / NCTC 7466), this protein is Large ribosomal subunit protein uL2.